Consider the following 210-residue polypeptide: 3-hexulose-6-phosphate synthase (210 aa).

This sequence belongs to the HPS/KGPDC family. HPS subfamily.

It catalyses the reaction D-ribulose 5-phosphate + formaldehyde = D-arabino-hex-3-ulose 6-phosphate. It functions in the pathway one-carbon metabolism; formaldehyde assimilation via RuMP pathway; D-fructose 6-phosphate from D-ribulose 5-phosphate and formaldehyde: step 1/2. Its function is as follows. Catalyzes the condensation of ribulose 5-phosphate with formaldehyde to form 3-hexulose 6-phosphate. The polypeptide is 3-hexulose-6-phosphate synthase (Staphylococcus aureus (strain USA300)).